Consider the following 387-residue polypeptide: MANNDFLFTSESVSEGHPDKVADQISDAILDAIFTQDPNARVAAETLCNTGLVVLAGEITTTANVDYIQVARDTIRHIGYDNTEYGIDYKGCAVLVAYDKQSPDIAQGVDRSSEDYLNQGAGDQGLMFGYACDETPDLMPAPIWYAHRLVQRQSELRKDGRLPWLRPDAKSQVTFRYVDGRPAEVDTVVLSTQHSPEISQASIREAVIEDIIKPSFPEGLITPKTKFLVNPTGRFVIGGPQGDCGLTGRKIIVDTYGGACPHGGGAFSGKDPSKVDRSAAYAARYVAKNVVAAGLARQCQVQVSYAIGVAEPINITVYTEGTGVIPDEQIAKLVREHFDLRPKGIVNMLDLLRPIYTKTAAYGHFGRSEPEFSWEATDKAAALKQGA.

Histidine 17 serves as a coordination point for ATP. Residue aspartate 19 participates in Mg(2+) binding. Position 45 (glutamate 45) interacts with K(+). The L-methionine site is built by glutamate 58 and glutamine 101. Residues glutamine 101 to arginine 111 are flexible loop. ATP contacts are provided by residues aspartate 168 to lysine 170, arginine 234 to phenylalanine 235, aspartate 243, arginine 249 to lysine 250, alanine 266, and lysine 270. Aspartate 243 contributes to the L-methionine binding site. Position 274 (lysine 274) interacts with L-methionine.

Belongs to the AdoMet synthase family. As to quaternary structure, homotetramer; dimer of dimers. The cofactor is Mg(2+). K(+) serves as cofactor.

It localises to the cytoplasm. It catalyses the reaction L-methionine + ATP + H2O = S-adenosyl-L-methionine + phosphate + diphosphate. Its pathway is amino-acid biosynthesis; S-adenosyl-L-methionine biosynthesis; S-adenosyl-L-methionine from L-methionine: step 1/1. Catalyzes the formation of S-adenosylmethionine (AdoMet) from methionine and ATP. The overall synthetic reaction is composed of two sequential steps, AdoMet formation and the subsequent tripolyphosphate hydrolysis which occurs prior to release of AdoMet from the enzyme. This Bordetella bronchiseptica (strain ATCC BAA-588 / NCTC 13252 / RB50) (Alcaligenes bronchisepticus) protein is S-adenosylmethionine synthase.